A 315-amino-acid chain; its full sequence is Gamma-hemolysin component C (315 aa).

Residues Met1 to Ala29 form the signal peptide.

Belongs to the aerolysin family. As to quaternary structure, toxicity requires sequential binding and synergistic association of a class S and a class F component which form heterooligomeric complexes. HlgC (class S) associates with HlgB (class F) thus forming an CB toxin.

In terms of biological role, toxin that seems to act by forming pores in the membrane of the cell. Has a hemolytic and a leucotoxic activity. In Staphylococcus aureus (strain COL), this protein is Gamma-hemolysin component C (hlgC).